Consider the following 193-residue polypeptide: NADH-quinone oxidoreductase subunit B (193 aa).

4 residues coordinate [4Fe-4S] cluster: Cys72, Cys73, Cys137, and Cys167.

Belongs to the complex I 20 kDa subunit family. In terms of assembly, NDH-1 is composed of 14 different subunits. Subunits NuoB, C, D, E, F, and G constitute the peripheral sector of the complex. Requires [4Fe-4S] cluster as cofactor.

The protein resides in the cell inner membrane. The catalysed reaction is a quinone + NADH + 5 H(+)(in) = a quinol + NAD(+) + 4 H(+)(out). NDH-1 shuttles electrons from NADH, via FMN and iron-sulfur (Fe-S) centers, to quinones in the respiratory chain. Couples the redox reaction to proton translocation (for every two electrons transferred, four hydrogen ions are translocated across the cytoplasmic membrane), and thus conserves the redox energy in a proton gradient. The chain is NADH-quinone oxidoreductase subunit B from Brucella anthropi (strain ATCC 49188 / DSM 6882 / CCUG 24695 / JCM 21032 / LMG 3331 / NBRC 15819 / NCTC 12168 / Alc 37) (Ochrobactrum anthropi).